The primary structure comprises 212 residues: MGKITSIEVQKRNVNRVNVYVDEAFTFACDAELIYKQGIQKDSLIDVEEIKEIVKEDEFIKCKNSALRTVEKTYKTEKELRDKLTEKGFEEDTIKRAIEFLKEYNLLNDEKYAEMYIKDRLRSQGRNKIKYALIRKGVSEDILLDKLSNIDSEDENYTAFKLAEKKYNILKKKESDKYKLSQKLFRFLLSKGYNYDCCNSIVRRLTNNEYME.

Belongs to the RecX family.

The protein localises to the cytoplasm. Modulates RecA activity. In Clostridium perfringens (strain SM101 / Type A), this protein is Regulatory protein RecX.